The primary structure comprises 231 residues: Glycerol-3-phosphate acyltransferase (231 aa).

6 helical membrane passes run F6–G26, W55–L75, L95–F115, I130–L150, L152–W172, and L196–I216.

This sequence belongs to the PlsY family. Probably interacts with PlsX.

The protein resides in the cell membrane. It carries out the reaction an acyl phosphate + sn-glycerol 3-phosphate = a 1-acyl-sn-glycero-3-phosphate + phosphate. Its pathway is lipid metabolism; phospholipid metabolism. In terms of biological role, catalyzes the transfer of an acyl group from acyl-phosphate (acyl-PO(4)) to glycerol-3-phosphate (G3P) to form lysophosphatidic acid (LPA). This enzyme utilizes acyl-phosphate as fatty acyl donor, but not acyl-CoA or acyl-ACP. This is Glycerol-3-phosphate acyltransferase from Aster yellows witches'-broom phytoplasma (strain AYWB).